Here is a 142-residue protein sequence, read N- to C-terminus: MELRAFCVILLITVLAVSSQAAKNKKEKGKKGASDCTEWTWGSCIPNSKDCGAGTREGTCKEETRKLKCKIPCNWKKAFGADCKYKFENWGECNATTGQKVRSGTLKKALYNADCQQTVEATKPCSLKTKSKSKGKKGKGKE.

An N-terminal signal peptide occupies residues 1–20 (MELRAFCVILLITVLAVSSQ). 5 disulfide bridges follow: Cys36–Cys60, Cys44–Cys69, Cys51–Cys73, Cys83–Cys115, and Cys93–Cys125.

The protein belongs to the pleiotrophin family. As to expression, expression at the mid-gastrula stage begins in the neural anlage, and becomes increasingly prominent in the central nervous system and head mesenchyme during neurula stages. Although the mRNA is localized to the developing central nervous system (CNS), the protein is deposited at the neuromuscular junction (NMJ). In the tailbud stage embryo, expressed in the head and tail regions as well as in the CNS. In adults, expression is highest in the brain, eye and bone, with lower expression in the heart and lung. Not expressed in the ovary.

Its subcellular location is the secreted. In terms of biological role, secreted protein that functions as a cytokine and growth factor and mediates its signal through cell-surface proteoglycan and non-proteoglycan receptors. Binds cell-surface proteoglycan receptors via their chondroitin sulfate (CS) groups. Thereby regulates many processes like inflammatory response, cell proliferation, cell adhesion, cell growth, cell survival, tissue regeneration, cell differentiation and cell migration. Inhibits mesoderm formation and promotes neural formation during development. Plays a role in development of the neuromuscular junction (NMJ). Has antibacterial activity against both Gram-positive and Gram-negative bacteria. The sequence is that of Midkine-A (mdk-a) from Xenopus laevis (African clawed frog).